Reading from the N-terminus, the 256-residue chain is UPF0246 protein HRM2_41860 (256 aa).

The protein belongs to the UPF0246 family.

The protein is UPF0246 protein HRM2_41860 of Desulforapulum autotrophicum (strain ATCC 43914 / DSM 3382 / VKM B-1955 / HRM2) (Desulfobacterium autotrophicum).